The following is a 99-amino-acid chain: Large ribosomal subunit protein bL21 (99 aa).

This sequence belongs to the bacterial ribosomal protein bL21 family. In terms of assembly, part of the 50S ribosomal subunit. Contacts protein L20.

This protein binds to 23S rRNA in the presence of protein L20. The chain is Large ribosomal subunit protein bL21 from Mycoplasmopsis pulmonis (strain UAB CTIP) (Mycoplasma pulmonis).